Here is a 301-residue protein sequence, read N- to C-terminus: 4-hydroxy-tetrahydrodipicolinate synthase (301 aa).

Thr50 is a pyruvate binding site. Tyr138 functions as the Proton donor/acceptor in the catalytic mechanism. The active-site Schiff-base intermediate with substrate is the Lys167. Ile209 serves as a coordination point for pyruvate.

This sequence belongs to the DapA family. As to quaternary structure, homotetramer; dimer of dimers.

It localises to the cytoplasm. It carries out the reaction L-aspartate 4-semialdehyde + pyruvate = (2S,4S)-4-hydroxy-2,3,4,5-tetrahydrodipicolinate + H2O + H(+). The protein operates within amino-acid biosynthesis; L-lysine biosynthesis via DAP pathway; (S)-tetrahydrodipicolinate from L-aspartate: step 3/4. In terms of biological role, catalyzes the condensation of (S)-aspartate-beta-semialdehyde [(S)-ASA] and pyruvate to 4-hydroxy-tetrahydrodipicolinate (HTPA). The chain is 4-hydroxy-tetrahydrodipicolinate synthase from Sorangium cellulosum (strain So ce56) (Polyangium cellulosum (strain So ce56)).